A 772-amino-acid chain; its full sequence is Ribosomal protein S6 kinase alpha-4 (772 aa).

Residues 33–301 (FELLKVLGTG…AQEVRNHPFF (269 aa)) form the Protein kinase 1 domain. Residues 39 to 47 (LGTGAYGKV) and lysine 65 each bind ATP. The active-site Proton acceptor is the aspartate 161. A Phosphoserine; by autocatalysis modification is found at serine 196. Positions 302 to 371 (QGLDWVALAA…VAPSILFDHN (70 aa)) constitute an AGC-kinase C-terminal domain. Position 343 is a phosphoserine; by MAPK1, MAPK3 and MAPK14 (serine 343). Serine 347 is subject to Phosphoserine. A phosphoserine; by autocatalysis mark is found at serine 360 and serine 365. A Protein kinase 2 domain is found at 411-674 (DLREPALGQG…LEGLRGSSWL (264 aa)). Residues 417–425 (LGQGSFSVC) and lysine 440 each bind ATP. Aspartate 530 acts as the Proton acceptor in catalysis. At threonine 542 the chain carries Phosphothreonine. Phosphothreonine; by MAPK1, MAPK3 and MAPK14 is present on threonine 568. Phosphoserine is present on residues serine 634 and serine 678. 2 disordered regions span residues 673–696 (WLQDGSARSSPPLRTPDVLESSGP) and 728–772 (AKRR…LPPS). Threonine 687 is subject to Phosphothreonine. The segment at 725 to 772 (APLAKRRKQKLRSATASRRGSPAPANPGRAPVASKGAPRRANGPLPPS) is required for nuclear targeting and association with MAPK14. The residue at position 737 (serine 737) is a Phosphoserine; by autocatalysis. Serine 745 carries the post-translational modification Phosphoserine.

It belongs to the protein kinase superfamily. AGC Ser/Thr protein kinase family. S6 kinase subfamily. In terms of assembly, forms a complex with either MAPK1/ERK2 or MAPK3/ERK1 in quiescent cells which transiently dissociates following mitogenic stimulation. Also associates with MAPK14/p38-alpha. Activated RPS6KA4 associates with and phosphorylates the NF-kappa-B p65 subunit RELA. Mg(2+) is required as a cofactor. Post-translationally, ser-343 and Thr-568 phosphorylation is required for kinase activity. Ser-343 and Ser-196 are autophosphorylated by the C-terminal kinase domain, and their phosphorylation is essential for the catalytic activity of the N-terminal kinase domain. Phosphorylated at Ser-343, Thr-568 and Thr-687 by MAPK1/ERK2, MAPK3/ERK1 and MAPK14/p38-alpha. Autophosphorylated at Ser-737 and Ser-745 by the N-terminal kinase domain.

The protein resides in the nucleus. It carries out the reaction L-seryl-[protein] + ATP = O-phospho-L-seryl-[protein] + ADP + H(+). The enzyme catalyses L-threonyl-[protein] + ATP = O-phospho-L-threonyl-[protein] + ADP + H(+). With respect to regulation, activated by phosphorylation at Ser-343, Thr-568 and Thr-687 by MAPK1/ERK2, MAPK3/ERK1 and MAPK14/p38-alpha, and by further autophosphorylation of Ser-196, Ser-360 and Ser-365 by the activated C-terminal kinase domain. Functionally, serine/threonine-protein kinase that is required for the mitogen or stress-induced phosphorylation of the transcription factors CREB1 and ATF1 and for the regulation of the transcription factor RELA, and that contributes to gene activation by histone phosphorylation and functions in the regulation of inflammatory genes. Phosphorylates CREB1 and ATF1 in response to mitogenic or stress stimuli such as UV-C irradiation, epidermal growth factor (EGF) and anisomycin. Plays an essential role in the control of RELA transcriptional activity in response to TNF. Phosphorylates 'Ser-10' of histone H3 in response to mitogenics, stress stimuli and EGF, which results in the transcriptional activation of several immediate early genes, including proto-oncogenes c-fos/FOS and c-jun/JUN. May also phosphorylate 'Ser-28' of histone H3. Mediates the mitogen- and stress-induced phosphorylation of high mobility group protein 1 (HMGN1/HMG14). In lipopolysaccharide-stimulated primary macrophages, acts downstream of the Toll-like receptor TLR4 to limit the production of pro-inflammatory cytokines. Functions probably by inducing transcription of the MAP kinase phosphatase DUSP1 and the anti-inflammatory cytokine interleukin 10 (IL10), via CREB1 and ATF1 transcription factors. The chain is Ribosomal protein S6 kinase alpha-4 (RPS6KA4) from Homo sapiens (Human).